Here is a 510-residue protein sequence, read N- to C-terminus: Nucleosome assembly protein 1-like 3 (510 aa).

2 disordered regions span residues 1-99 (MAEA…LGTN) and 161-311 (PTEE…KRED). Positions 35–74 (SSSSSSSTSGSSSSSSTSGSSSSSGSGSSSSSSGSGSTSS) are enriched in low complexity. Acidic residues predominate over residues 161–182 (PTEEECEWNSEDEEFSSDEEVQ). 3 stretches are compositionally biased toward basic and acidic residues: residues 200–229 (PKEN…EVPK), 235–246 (KAEEKADSKDCM), and 254–300 (EDPK…VDLK).

The protein belongs to the nucleosome assembly protein (NAP) family.

The protein localises to the nucleus. The polypeptide is Nucleosome assembly protein 1-like 3 (NAP1L3) (Pongo abelii (Sumatran orangutan)).